Consider the following 831-residue polypeptide: Periplasmic nitrate reductase (831 aa).

The tat-type signal signal peptide spans 1 to 29; it reads MKISRRDFIKQTAITATASVAGVTLPAGA. In terms of domain architecture, 4Fe-4S Mo/W bis-MGD-type spans 41–97; the sequence is LKWSKAPCRFCGTGCGVTVAVKDNKVVATQGDPQAEVNKGLNCVKGYFLSKIMYGQD. Residues Cys48, Cys51, Cys55, and Cys83 each contribute to the [4Fe-4S] cluster site. Mo-bis(molybdopterin guanine dinucleotide)-binding positions include Lys85, Gln152, Asn177, Cys181, 214–221, 245–249, 264–266, Met375, Gln379, Asn485, 511–512, Lys534, Asp561, and 721–730; these read WGSNMAEM, STFTH, QTD, SD, and TGRVLEHWHS. Trp797 is a binding site for substrate. Asn805 and Lys822 together coordinate Mo-bis(molybdopterin guanine dinucleotide).

It belongs to the prokaryotic molybdopterin-containing oxidoreductase family. NasA/NapA/NarB subfamily. In terms of assembly, component of the periplasmic nitrate reductase NapAB complex composed of NapA and NapB. [4Fe-4S] cluster serves as cofactor. Requires Mo-bis(molybdopterin guanine dinucleotide) as cofactor. Predicted to be exported by the Tat system. The position of the signal peptide cleavage has been experimentally proven.

Its subcellular location is the periplasm. The catalysed reaction is 2 Fe(II)-[cytochrome] + nitrate + 2 H(+) = 2 Fe(III)-[cytochrome] + nitrite + H2O. Its function is as follows. Catalytic subunit of the periplasmic nitrate reductase complex NapAB. Receives electrons from NapB and catalyzes the reduction of nitrate to nitrite. In Cupriavidus necator (strain ATCC 17699 / DSM 428 / KCTC 22496 / NCIMB 10442 / H16 / Stanier 337) (Ralstonia eutropha), this protein is Periplasmic nitrate reductase.